Here is a 763-residue protein sequence, read N- to C-terminus: High glucose sensor RGT2 (763 aa).

The interval 1–28 is disordered; it reads MNDSQNCLRQREENSHLNPGNDFGHHQG. The Cytoplasmic portion of the chain corresponds to 1–99; it reads MNDSQNCLRQ…PLPLRSNVMS (99 aa). Residues 100–120 form a helical membrane-spanning segment; the sequence is VLVGIFVAVGGFLFGYDTGLI. Residues 121 to 144 are Extracellular-facing; the sequence is NSITDMPYVKTYIAPNHSYFTTSQ. Asn-136 is a glycosylation site (N-linked (GlcNAc...) asparagine). A helical membrane pass occupies residues 145 to 165; the sequence is IAILVSFLSLGTFFGALIAPY. The Cytoplasmic portion of the chain corresponds to 166–175; sequence ISDSYGRKPT. Residues 176–196 traverse the membrane as a helical segment; that stretch reads IMFSTAVIFSIGNSLQVASGG. Position 197 (Leu-197) is a topological domain, extracellular. Residues 198-218 traverse the membrane as a helical segment; the sequence is VLLIVGRVISGIGIGIISAVV. Topologically, residues 219 to 231 are cytoplasmic; sequence PLYQAEAAQKNLR. A helical membrane pass occupies residues 232 to 252; it reads GAIISSYQWAITIGLLVSSAV. Over 253 to 266 the chain is Extracellular; the sequence is SQGTHSKNGPSSYR. Residues 267–287 form a helical membrane-spanning segment; that stretch reads IPIGLQYVWSSILAVGMIFLP. At 288 to 357 the chain is on the cytoplasmic side; the sequence is ESPRYYVLKD…SENRPKQILR (70 aa). Residues 358-378 form a helical membrane-spanning segment; it reads IFTGIAIQAFQQASGINFIFY. The Extracellular portion of the chain corresponds to 379 to 393; it reads YGVNFFNNTGVDNSY. N-linked (GlcNAc...) asparagine glycosylation occurs at Asn-385. Residues 394–414 traverse the membrane as a helical segment; sequence LVSFISYAVNVAFSIPGMYLV. Topologically, residues 415–421 are cytoplasmic; sequence DRIGRRP. Residues 422-442 form a helical membrane-spanning segment; it reads VLLAGGVIMAIANLVIAIVGV. At 443–452 the chain is on the extracellular side; it reads SEGKTVVASK. A helical membrane pass occupies residues 453-473; the sequence is IMIAFICLFIAAFSATWGGVV. The Cytoplasmic segment spans residues 474-491; that stretch reads WVVSAELYPLGVRSKCTA. The helical transmembrane segment at 492–512 threads the bilayer; the sequence is ICAAANWLVNFTCALITPYIV. At 513 to 524 the chain is on the extracellular side; sequence DVGSHTSSMGPK. The helical transmembrane segment at 525-545 threads the bilayer; the sequence is IFFIWGGLNVVAVIVVYFAVY. At 546 to 763 the chain is on the cytoplasmic side; it reads ETRGLTLEEI…SKHSQYTSPQ (218 aa). Low complexity predominate over residues 725 to 737; that stretch reads SSTTSNDTSFSPS. The disordered stretch occupies residues 725–763; sequence SSTTSNDTSFSPSHNSNARTSSNWTSDLASKHSQYTSPQ. The segment covering 738–763 has biased composition (polar residues); sequence HNSNARTSSNWTSDLASKHSQYTSPQ.

Belongs to the major facilitator superfamily. Sugar transporter (TC 2.A.1.1) family. As to quaternary structure, interacts with YCK1. Interacts with MTH1 and STD1. Phosphorylated in the C-terminal tail on Yck consensus sites in a yeast casein kinases YCK1 and YCK2 (Yck)-dependent manner. This phosphorylation is required for interaction with HXT corepressors MTH1 and STD1 and ultimately HXT expression.

The protein localises to the cell membrane. Its function is as follows. Low-affinity high glucose sensor that is part of the sensor/receptor-repressor (SSR) glucose-signaling pathway, which detects extracellular glucose and induces expression of glucose transporters that bring glucose into the cell. The transporter-like sensor generates an intracellular signal in the presence of high levels of glucose to promote high glucose-induced expression of HXT1. Binding of glucose to the RGT2 transmembrane domain activates a downstream signaling cascade, leading to phosphorylation of the RGT1 corepressors MTH1 and STD1, targeting them for SCF(Grr1)-dependent ubiquitination and degradation. Depletion of the corepressors robs RGT1 of its ability to repress expression of HXT genes, leading to accumulation of glucose transporters in the plasma membrane. Even though RGT2 is similar to glucose transporters, it appears to be unable to transport glucose. The chain is High glucose sensor RGT2 from Saccharomyces cerevisiae (strain ATCC 204508 / S288c) (Baker's yeast).